Reading from the N-terminus, the 156-residue chain is MTDVLLCVGNSMMGDDGAGPLLAEKCAAAPKGNWVVIDGGSAPENDIVAIRELRPTRLLIVDATDMGLNPGEIRIIDPDDIAEMFMMTTHNMPLNYLIDQLKEDIGEVIFLGIQPDIVGFYYPMTQPIKDAVETVYQRLEGWEGNGGFAQLAVEEE.

Ni(2+) is bound by residues Asp-16, Asp-62, and His-90.

The protein belongs to the peptidase A31 family. Monomer.

The catalysed reaction is This enzyme specifically removes a 32-amino acid peptide from the C-terminus of the precursor of the large subunit of E.coli hydrogenase 3 by cleavage at the C-terminal side of Arg-537.. Its function is as follows. Protease involved in the C-terminal processing of HycE, the large subunit of hydrogenase 3. This chain is Hydrogenase 3 maturation protease (hycI), found in Escherichia coli O157:H7.